The primary structure comprises 277 residues: Large ribosomal subunit protein mL46 (277 aa).

Lys217 carries the post-translational modification N6-succinyllysine. Lys228 carries the N6-acetyllysine modification. Lys246 carries the post-translational modification N6-succinyllysine.

It belongs to the mitochondrion-specific ribosomal protein mL46 family. As to quaternary structure, component of the mitochondrial ribosome large subunit (39S) which comprises a 16S rRNA and about 50 distinct proteins.

The protein resides in the mitochondrion. This is Large ribosomal subunit protein mL46 (Mrpl46) from Rattus norvegicus (Rat).